The chain runs to 1616 residues: MAHIQQSMQGALLDTVRGQNSLVNDLAKRRLYDTAVEEFNAKDRRPKINFSKSINEEQTLIVSQAYPEFQITFYNTQLAVHSLAAGLRSLELEYLMMQVPYGSLTYDIGGNFAAHLFKGRDYVHCCMPNLDLRDIMRHENQKDSVATYLSRLKARNKVLPAFQQEAFQRYSERSDEVVCNNTFQCCESNRYSSGGRVYAISLHSLYDIPADELGAALLRKNVHTLYAAFHFAEELLLEVSTVELPTIGGIFSRDGDKINFCFSNESTLNYSHSYSNLLKYVCKTYFPASNRFVYMKEFLITRVNTWFCKFTKLDTYTLYRGVYHRGCDQQEFYSAMEDAWHYKKTLAMLNSERIVLEDHSSVNYWFPKMKDMVIVPLFDVSLETQKRTKKEVIVSKDFVYTVLNHIRTYQAKALTYNNVLSFVESIRSRVIINGVTARSEWDVDKALLQSMAMTFFLITKLSMLKDELLVSKFTLSAKSVHEHVWDEIKRGCGNMFPSLKESLLRKKLISGSAEELEIEVPDMYVTFHDRFVAEYKASVEMPTIDISKDLSEAESYYSALSELSVLENSKDFDLEKFSRMCAINCVNPDIAAKIVVAVLSNESGVTLPFKEPTEGNMAEAMKSGEKDEVLTLGSQTDNTDLTSKSMVISGSLPLCGIASEISCDTFVRNEEINSLEEYHMLAAESVISNKMASIVYSGPLQVQQMQNYVDSLAASLSATVSNLKKLVKDSSVGFQDSLSKVGVFDVRKKMWLIKPTLKNHSWGVVQKFDGKCFLALLSYHNELPICDADWSKVAVSNESMVYSDMAKLRVLRKSIGEMPISVSSAKVTLVDGVPGCGKTKEILRRVNFSEDLVLVPGKEAAAMIRKRANQSGNIVANNDNVKTVDSFLMNLGKGPVCQFKRLFVDEGLMLHPGCVYFLVKLSLCNEAFVFGDTQQIPYINRVQNFPFPQHFSKLIVDETEKRRTTLRCPVDVTHFLNQCYDGAVTTTSKTQRSVGLEVVGGAAVMNPVTKPLKGKIVTFTQSDKLTMLSRGYQDVNTVHEIQGETYEEVSLVRLTPTPIHIISRESPHVLVGLTRHTRCFKYYTVVLDPLVKLVRDLECVSNFLLDVYMVDSVSAXQLQVSGVYLAENLFVQAPKSGDAQDLQFYYDKCLPGNSTVLNEFDAVTMNCSDISLNVKDCVLDFSKSVPLPRDNTKVPMTPVIRTAAERPRSQGLLENLVAMIKRNFNSPELSGTVDMENTASVVADRFFDSYFLKDKLSGCSLGDSGGKNIIDRQALIRWMEKQEKSTIGQLADYDFVDLPAIDQYRHIIKSQPKQKLDLSIQSEYPSLQTIVYHSKKINALFGPIFSELTRQMLSAIDTSRYLFFTRKTPEQIEEFFSDLDAHQPMEVLELDVSKYDKSQNEFHCAVEYEIWKRLGIDEFLAEVWKQGHRKTTLKDYTAGIKTCLWYQRKSGDVTTFIGNTVIIAACMASMLPMEKVIKAAFCGDDSLVYLPKGCELPNIQSCANLMWNFEAKLFKKTYGYFCGRYVIHHDRGAIVYVDPLKIISKLGAKHITDKEHLEEFRISLADVSKSLNNCAYYAQLDEAVREVHKTAPPGSFVYKCIVKFLSNRVLFESLFF.

Residues 50–466 (FSKSINEEQT…LITKLSMLKD (417 aa)) form a methyltransferase region. Positions 72–281 (TFYNTQLAVH…HSYSNLLKYV (210 aa)) constitute an Alphavirus-like MT domain. The (+)RNA virus helicase ATP-binding domain occupies 800–962 (MVYSDMAKLR…KLIVDETEKR (163 aa)). The interval 828-1084 (TLVDGVPGCG…RHTRCFKYYT (257 aa)) is helicase. Position 832-839 (832-839 (GVPGCGKT)) interacts with ATP. The region spanning 963 to 1115 (RTTLRCPVDV…DVYMVDSVSA (153 aa)) is the (+)RNA virus helicase C-terminal domain. Positions 1385 to 1498 (MEVLELDVSK…YLPKGCELPN (114 aa)) constitute a RdRp catalytic domain.

The protein belongs to the ssRNA positive-strand viruses RNA-directed RNA polymerase family. In terms of assembly, heterodimer of a large and a small subunit.

It catalyses the reaction RNA(n) + a ribonucleoside 5'-triphosphate = RNA(n+1) + diphosphate. The enzyme catalyses ATP + H2O = ADP + phosphate + H(+). Is an RNA-dependent RNA polymerase active in viral RNA replication. In terms of biological role, is a methyltransferase active in RNA capping and an RNA helicase. Methyltransferase displays a cytoplasmic capping enzyme activity. This function is necessary since all viral RNAs are synthesized in the cytoplasm, and host capping enzymes are restricted to the nucleus. Helicase region probably exhibits NTPase and RNA unwinding activities (Potential). It also acts as a suppressor of RNA-mediated gene silencing, also known as post-transcriptional gene silencing (PTGS), a mechanism of plant viral defense that limits the accumulation of viral RNAs. May mediate silencing suppression through either inhibition of HEN1-mediated siRNA or siRNA demethylation. This Tobamovirus Ob protein is Replicase large subunit.